Consider the following 1962-residue polypeptide: Sodium channel protein type 10 subunit alpha (1962 aa).

At 1–125 (MEFPFGSLET…FNLIRRTAIK (125 aa)) the chain is on the cytoplasmic side. The segment at 32 to 56 (QAAKKAKGKHREQKDQEEKPRPQLD) is disordered. Residues 33 to 42 (AAKKAKGKHR) show a composition bias toward basic residues. Basic and acidic residues predominate over residues 43–55 (EQKDQEEKPRPQL). One copy of the I repeat lies at 116–414 (FNLIRRTAIK…VTMAYEEQNQ (299 aa)). The helical transmembrane segment at 126–149 (VSVHSWFSLFITVTILVNCVGMTQ) threads the bilayer. Topologically, residues 150-154 (TELPD) are extracellular. A helical membrane pass occupies residues 155 to 174 (RIEYVFTVIYTFEALIKILA). Residues 175–187 (RGFCLNEFAYLRD) lie on the Cytoplasmic side of the membrane. A helical membrane pass occupies residues 188–206 (PWDWLDFSVITLAYIGEAT). Over 207-212 (ALRGIS) the chain is Extracellular. Residues 213–232 (GLRTFRVLRALKTVSVIPGL) traverse the membrane as a helical; Voltage-sensor segment. Residues 233 to 248 (KVIVGALIHSVRKLAD) are Cytoplasmic-facing. A helical membrane pass occupies residues 249-272 (VTILTVFCLSVFALVGLQLFKGNL). Residues 273–350 (KNKCVKNCAA…PDFNYTSFDS (78 aa)) are Extracellular-facing. Cysteine 276 and cysteine 328 are joined by a disulfide. N-linked (GlcNAc...) asparagine glycans are attached at residues asparagine 284, asparagine 288, asparagine 321, and asparagine 344. The segment at residues 351-375 (FAWAFLSLFRLMTQDSWERLYQQTL) is an intramembrane region (pore-forming). The Extracellular portion of the chain corresponds to 376-382 (RASGKMY). A helical membrane pass occupies residues 383-408 (MVFFVLVIFLGSFYLVNLILAVVTMA). Residues 409–668 (YEEQNQATID…TWVKLKTVLF (260 aa)) lie on the Cytoplasmic side of the membrane. Serine 450, serine 453, serine 476, and serine 488 each carry phosphoserine. Polar residues predominate over residues 452–463 (HSCNGSPLPSKN). Disordered stretches follow at residues 452–493 (HSCN…PYNQ) and 521–586 (LDTS…TGEL). Phosphoserine is present on residues serine 621 and serine 624. An II repeat occupies 656 to 920 (CCPTWVKLKT…DEDGEVNNLQ (265 aa)). Residues 669–693 (GIVTDPFAELTTTLCIVVNTVFMAM) traverse the membrane as a helical segment. At 694–704 (EHHGMSSAFEA) the chain is on the extracellular side. Residues 705 to 728 (MLQIGNIVFTVFFTAEMVFKIIAF) traverse the membrane as a helical segment. The Cytoplasmic portion of the chain corresponds to 729-736 (DPYYYFQK). Residues 737 to 756 (RWNIFDCIIVTVSLIELGAA) traverse the membrane as a helical segment. The Extracellular segment spans residues 757–762 (RKGSLS). The chain crosses the membrane as a helical; Voltage-sensor span at residues 763 to 782 (VLRTFRLLRVFKLAKSWPTL). Residues 783-798 (NTLIKIIGNSVGALGN) lie on the Cytoplasmic side of the membrane. Residues 799 to 819 (LTIILAIIVFVFALVGKQLLG) form a helical membrane-spanning segment. The Extracellular portion of the chain corresponds to 820 to 843 (ENYRDNRRNISAPNEEWPRWHMHD). The N-linked (GlcNAc...) asparagine glycan is linked to asparagine 828. Positions 844-864 (FFHSFLIVFRILCGEWIENMW) form an intramembrane region, pore-forming. At 865–873 (ACMEVGQKS) the chain is on the extracellular side. An intrachain disulfide couples cysteine 866 to cysteine 875. Residues 874 to 899 (ICLILFLTVMVLGNLVVLNLFTALLL) traverse the membrane as a helical segment. Over 900–1154 (NSFSADNLAT…GWQVRKTCYR (255 aa)) the chain is Cytoplasmic. A compositionally biased stretch (acidic residues) spans 1015-1026 (LDDLEEDGEEDS). A disordered region spans residues 1015–1035 (LDDLEEDGEEDSQSSQQEVIL). The III repeat unit spans residues 1147–1456 (QVRKTCYRIV…KKYYNAMKKL (310 aa)). The helical transmembrane segment at 1155–1178 (IVEHSWFESFIIFMILLSSGSLAF) threads the bilayer. The Extracellular segment spans residues 1179–1191 (EDYHLDQKPTVKA). The chain crosses the membrane as a helical span at residues 1192 to 1217 (LLEYTDRMFTFIFVLEMLLKWVAYGF). The Cytoplasmic segment spans residues 1218–1223 (KKYFTN). Residues 1224–1245 (AWCWLDFLIVNISLISLIAKIL) form a helical membrane-spanning segment. Residues 1246 to 1249 (QYSD) are Extracellular-facing. A helical; Voltage-sensor transmembrane segment spans residues 1250–1271 (VASIKALRTLRALRPLRALSRF). The Cytoplasmic segment spans residues 1272–1290 (EGMRVVVDALVGAIPSIMN). The helical transmembrane segment at 1291–1318 (VLLVCLIFWLIFSTMGVNFFAGKFGRCI) threads the bilayer. N-linked (GlcNAc...) asparagine glycans are attached at residues asparagine 1319, asparagine 1335, and asparagine 1343. The Extracellular segment spans residues 1319–1360 (NKTNEYFSLVPLSIVNNISDCKYQNHTGSFFWVNVKVNFDNV). Positions 1361–1382 (AMGYLALLQVATFKGWMDIMYA) form an intramembrane region, pore-forming. Residues 1383-1398 (AVDARDVNLQPKWEDN) lie on the Extracellular side of the membrane. Residues 1399–1425 (VYMYLYFVIFIIFGGFFTLNLFVGVII) traverse the membrane as a helical segment. Topologically, residues 1426–1478 (DNFNQQKKKLGGQDIFMTEEQKKYYNAMKKLGSKKPQKPIPRPLNKYQGFVFD) are cytoplasmic. Serine 1458 is modified (phosphoserine; by PKC). An IV repeat occupies 1465–1764 (IPRPLNKYQG…WEKFDPEATQ (300 aa)). The helical transmembrane segment at 1479 to 1502 (IVTKQAFDIVIMVLICLNMITMMV) threads the bilayer. Over 1503–1513 (ETDEQSAEKTK) the chain is Extracellular. The chain crosses the membrane as a helical span at residues 1514-1537 (ILNKINQFFVAVFTGECVMKMFAL). At 1538–1543 (RHYYFT) the chain is on the cytoplasmic side. Residues 1544–1567 (NGWNVFDFIVVVLSIGSLVFSVIL) form a helical membrane-spanning segment. Over 1568–1579 (TSLENYFSPTLF) the chain is Extracellular. A helical; Voltage-sensor membrane pass occupies residues 1580 to 1601 (RVIRLARIGRILRLIRAAKGIR). Residues 1602–1616 (TLLFALMMSLPALFN) are Cytoplasmic-facing. A helical transmembrane segment spans residues 1617 to 1639 (IGLLLFLVMFIYSIFGMASFPHV). At 1640-1653 (SWEAGIDDMFNFQT) the chain is on the extracellular side. The pore-forming intramembrane region spans 1654–1676 (FANSMLCLFQITTSAGWDGLLSP). Residues 1677–1704 (ILNTGPPYCDPNLPNSNGSRGNCGSPAV) lie on the Extracellular side of the membrane. The N-linked (GlcNAc...) asparagine glycan is linked to asparagine 1693. Residues 1705–1729 (GILFFTTYIIISFLIVVNMYIAVIL) traverse the membrane as a helical segment. At 1730–1962 (ENFNVATQES…TSKKVTAPGP (233 aa)) the chain is on the cytoplasmic side. Residues 1858-1887 (EDISATVIQKAYRSYVLHRSMTISNPPAVP) form the IQ domain. A disordered region spans residues 1914 to 1962 (KSETASAASFPPSYDSVTRGLSDQINMSTSSSMQNEDEGTSKKVTAPGP). Positions 1928-1947 (DSVTRGLSDQINMSTSSSMQ) are enriched in polar residues.

Belongs to the sodium channel (TC 1.A.1.10) family. Nav1.8/SCN10A subfamily. In terms of assembly, the channel consists of an ion conducting pore forming alpha-subunit regulated by one or more associated auxiliary subunits SCN1B, SCN2B and SCN3B; electrophysiological properties may vary depending on the type of the associated beta subunits. Found in a number of complexes with PRX, DYNLT1 and PDZD2. Interacts with proteins such as FSTL1, PRX, DYNLT1, PDZD2, S100A10 and many others. Interacts with NEDD4 and NEDD4L. Post-translationally, ubiquitinated by NEDD4L; which promotes its endocytosis. In terms of processing, phosphorylation at Ser-1458 by PKC in a highly conserved cytoplasmic loop slows inactivation of the sodium channel and reduces peak sodium currents. Lacks the cysteine which covalently binds the conotoxin GVIIJ. This cysteine (position 825) is speculated in other sodium channel subunits alpha to be implied in covalent binding with the sodium channel subunit beta-2 or beta-4. In terms of tissue distribution, expressed in nodose ganglia, but not in cortex, hippocampus, cerebellum, liver, heart and skeletal muscle.

Its subcellular location is the cell membrane. The enzyme catalyses Na(+)(in) = Na(+)(out). Tetrodotoxin-resistant channel that mediates the voltage-dependent sodium ion permeability of excitable membranes. Assuming opened or closed conformations in response to the voltage difference across the membrane, the protein forms a sodium-selective channel through which sodium ions may pass in accordance with their electrochemical gradient. Plays a role in neuropathic pain mechanisms. The chain is Sodium channel protein type 10 subunit alpha (SCN10A) from Canis lupus familiaris (Dog).